Reading from the N-terminus, the 233-residue chain is Translation initiation factor 6 (233 aa).

It belongs to the eIF-6 family.

Its function is as follows. Binds to the 50S ribosomal subunit and prevents its association with the 30S ribosomal subunit to form the 70S initiation complex. The chain is Translation initiation factor 6 from Aeropyrum pernix (strain ATCC 700893 / DSM 11879 / JCM 9820 / NBRC 100138 / K1).